Here is a 195-residue protein sequence, read N- to C-terminus: Peptidyl-tRNA hydrolase (195 aa).

Position 17 (Tyr-17) interacts with tRNA. His-22 (proton acceptor) is an active-site residue. 3 residues coordinate tRNA: Phe-68, Asn-70, and Asn-116.

Belongs to the PTH family. As to quaternary structure, monomer.

It is found in the cytoplasm. It catalyses the reaction an N-acyl-L-alpha-aminoacyl-tRNA + H2O = an N-acyl-L-amino acid + a tRNA + H(+). Functionally, hydrolyzes ribosome-free peptidyl-tRNAs (with 1 or more amino acids incorporated), which drop off the ribosome during protein synthesis, or as a result of ribosome stalling. In terms of biological role, catalyzes the release of premature peptidyl moieties from peptidyl-tRNA molecules trapped in stalled 50S ribosomal subunits, and thus maintains levels of free tRNAs and 50S ribosomes. This is Peptidyl-tRNA hydrolase from Pectobacterium atrosepticum (strain SCRI 1043 / ATCC BAA-672) (Erwinia carotovora subsp. atroseptica).